A 192-amino-acid polypeptide reads, in one-letter code: UPF0312 protein Pput_4854 (192 aa).

Positions 1-23 are cleaved as a signal peptide; the sequence is MLKKTFAALALGTALLSAGQAMA.

This sequence belongs to the UPF0312 family. Type 1 subfamily.

The protein resides in the periplasm. The protein is UPF0312 protein Pput_4854 of Pseudomonas putida (strain ATCC 700007 / DSM 6899 / JCM 31910 / BCRC 17059 / LMG 24140 / F1).